Here is a 424-residue protein sequence, read N- to C-terminus: UDP-N-acetylglucosamine 1-carboxyvinyltransferase (424 aa).

Residue 22–23 coordinates phosphoenolpyruvate; it reads KN. Residue Arg-93 coordinates UDP-N-acetyl-alpha-D-glucosamine. Catalysis depends on Cys-117, which acts as the Proton donor. Cys-117 carries the post-translational modification 2-(S-cysteinyl)pyruvic acid O-phosphothioketal. UDP-N-acetyl-alpha-D-glucosamine contacts are provided by residues 122–126, 162–165, Asp-307, and Ile-329; these read RPVDL and KVSV.

This sequence belongs to the EPSP synthase family. MurA subfamily.

Its subcellular location is the cytoplasm. The enzyme catalyses phosphoenolpyruvate + UDP-N-acetyl-alpha-D-glucosamine = UDP-N-acetyl-3-O-(1-carboxyvinyl)-alpha-D-glucosamine + phosphate. Its pathway is cell wall biogenesis; peptidoglycan biosynthesis. In terms of biological role, cell wall formation. Adds enolpyruvyl to UDP-N-acetylglucosamine. The chain is UDP-N-acetylglucosamine 1-carboxyvinyltransferase from Haemophilus influenzae (strain PittEE).